A 358-amino-acid polypeptide reads, in one-letter code: Cytoplasmic dynein 2 light intermediate chain 1 (358 aa).

Disordered regions lie at residues 1-35 (MPKV…EDAH) and 307-358 (ESTR…ALDP). The segment covering 24–33 (TDEEEAEEED) has biased composition (acidic residues). Basic and acidic residues-rich tracts occupy residues 307–320 (ESTR…DPVK) and 333–349 (RAQK…EQAK).

Belongs to the dynein light intermediate chain family. Light intermediate chain of the cytoplasmic dynein complex 2, a multisubunit complex composed at least of eleven different proteins. The cytoplasmic dynein 2 complex consists of two catalytic heavy chains (HCs) and a number of non-catalytic subunits presented by intermediate chains (ICs), light intermediate chains (LICs) and light chains (LCs). Among them, a heavy chain (DYNC2H1), two intermediate chains (DYNC2I2 and DYNC2I1), a light intermediate chain (DYNC2LI1), and a light chain (DYNLT2B) are unique to the dynein-2 complex, but a subset of light chains are also shared by dynein-1 and dynein-2 complexes. Dynein-2 complex is built around two copies of cytoplasmic dynein 2 heavy chain 1 (DYNC2H1). The C-terminal region forms the motor domain, which converts the energy from ATP hydrolysis into movement. Its N-terminal region forms the tail, an extended structure that binds the other subunits and holds the two heavy chains in a homodimer.

The protein localises to the cytoplasm. The protein resides in the cell projection. It is found in the cilium. Its subcellular location is the cytoskeleton. It localises to the cilium basal body. The protein localises to the cilium axoneme. The protein resides in the microtubule organizing center. It is found in the centrosome. Functionally, acts as one of several non-catalytic accessory components of the cytoplasmic dynein 2 complex (dynein-2 complex), a motor protein complex that drives the movement of cargos along microtubules within cilia and flagella in concert with the intraflagellar transport (IFT) system, facilitating the assembly of these organelles. In Danio rerio (Zebrafish), this protein is Cytoplasmic dynein 2 light intermediate chain 1 (dync2li1).